Here is a 345-residue protein sequence, read N- to C-terminus: Ferrochelatase (345 aa).

Fe cation contacts are provided by His-215 and Glu-296.

It belongs to the ferrochelatase family.

Its subcellular location is the cytoplasm. The catalysed reaction is heme b + 2 H(+) = protoporphyrin IX + Fe(2+). The protein operates within porphyrin-containing compound metabolism; protoheme biosynthesis; protoheme from protoporphyrin-IX: step 1/1. Its function is as follows. Catalyzes the ferrous insertion into protoporphyrin IX. This Rhodopseudomonas palustris (strain TIE-1) protein is Ferrochelatase.